The chain runs to 434 residues: Nuclear distribution protein PAC1 (434 aa).

Residues 8 to 40 (QKDDLHKAMLDYLYANNHTAAFNALKESAGITY) enclose the LisH domain. A coiled-coil region spans residues 57–83 (TSVIRLQKKIMELENRNAALQEELSMS). 7 WD repeats span residues 106-147 (GHRA…RTLK), 149-187 (HTKP…KNTK), 191-230 (GHDH…QVRT), 233-272 (GHSE…PKSE), 275-334 (GHEN…MIRN), 337-378 (GHDN…RIVE), and 401-434 (KKVN…IWLP).

The protein belongs to the WD repeat LIS1/nudF family. As to quaternary structure, self-associates. Interacts with NDL1 and dynein.

It localises to the cytoplasm. It is found in the cytoskeleton. Its subcellular location is the spindle pole. Functionally, positively regulates the activity of the minus-end directed microtubule motor protein dynein. May enhance dynein-mediated microtubule sliding by targeting dynein to the microtubule plus end. Required for nuclear migration during vegetative growth as well as development. Required for retrograde early endosome (EE) transport from the hyphal tip. Required for localization of dynein to the mitotic spindle poles. Recruits additional proteins to the dynein complex at SPBs. The chain is Nuclear distribution protein PAC1 from Coprinopsis cinerea (strain Okayama-7 / 130 / ATCC MYA-4618 / FGSC 9003) (Inky cap fungus).